A 170-amino-acid polypeptide reads, in one-letter code: Photosystem I assembly protein Ycf3 (170 aa).

TPR repeat units lie at residues 35 to 68 (AFTYYRDGMLAQSEGNYAEALQNYYEAMRLEIDP), 72 to 105 (SYILYNIGLIHTSNGEHTKALEYYFRALERNPFL), and 120 to 153 (GEQAILQGDSEIAEAWFDQAAEYWKQAIALTPGN).

It belongs to the Ycf3 family.

The protein resides in the plastid. It localises to the chloroplast thylakoid membrane. Essential for the assembly of the photosystem I (PSI) complex. May act as a chaperone-like factor to guide the assembly of the PSI subunits. This Zea mays (Maize) protein is Photosystem I assembly protein Ycf3.